A 391-amino-acid chain; its full sequence is Succinyl-diaminopimelate desuccinylase (391 aa).

Position 67 (histidine 67) interacts with Zn(2+). Aspartate 69 is a catalytic residue. Aspartate 101 provides a ligand contact to Zn(2+). The active-site Proton acceptor is the glutamate 135. Zn(2+) contacts are provided by glutamate 136, glutamate 164, and histidine 353.

Belongs to the peptidase M20A family. DapE subfamily. As to quaternary structure, homodimer. Requires Zn(2+) as cofactor. Co(2+) serves as cofactor.

It catalyses the reaction N-succinyl-(2S,6S)-2,6-diaminopimelate + H2O = (2S,6S)-2,6-diaminopimelate + succinate. It participates in amino-acid biosynthesis; L-lysine biosynthesis via DAP pathway; LL-2,6-diaminopimelate from (S)-tetrahydrodipicolinate (succinylase route): step 3/3. Catalyzes the hydrolysis of N-succinyl-L,L-diaminopimelic acid (SDAP), forming succinate and LL-2,6-diaminopimelate (DAP), an intermediate involved in the bacterial biosynthesis of lysine and meso-diaminopimelic acid, an essential component of bacterial cell walls. In Rickettsia bellii (strain OSU 85-389), this protein is Succinyl-diaminopimelate desuccinylase.